A 759-amino-acid chain; its full sequence is 5-methyltetrahydropteroyltriglutamate--homocysteine methyltransferase (759 aa).

5-methyltetrahydropteroyltri-L-glutamate contacts are provided by residues 17 to 20 and Lys-116; that span reads RELK. Residues 430-432 and Glu-483 each bind L-homocysteine; that span reads IGS. L-methionine is bound by residues 430–432 and Glu-483; that span reads IGS. Residues 514-515 and Trp-560 contribute to the 5-methyltetrahydropteroyltri-L-glutamate site; that span reads RC. Asp-598 contacts L-homocysteine. Asp-598 contributes to the L-methionine binding site. Glu-604 contacts 5-methyltetrahydropteroyltri-L-glutamate. 3 residues coordinate Zn(2+): His-641, Cys-643, and Glu-665. Catalysis depends on His-694, which acts as the Proton donor. Cys-726 is a binding site for Zn(2+).

It belongs to the vitamin-B12 independent methionine synthase family. Zn(2+) serves as cofactor.

It carries out the reaction 5-methyltetrahydropteroyltri-L-glutamate + L-homocysteine = tetrahydropteroyltri-L-glutamate + L-methionine. The protein operates within amino-acid biosynthesis; L-methionine biosynthesis via de novo pathway; L-methionine from L-homocysteine (MetE route): step 1/1. In terms of biological role, catalyzes the transfer of a methyl group from 5-methyltetrahydrofolate to homocysteine resulting in methionine formation. The chain is 5-methyltetrahydropteroyltriglutamate--homocysteine methyltransferase from Lactococcus lactis subsp. lactis (strain IL1403) (Streptococcus lactis).